A 330-amino-acid chain; its full sequence is Calponin-3 (330 aa).

N6-acetyllysine is present on Lys-23. Residues 26–130 (QQAEEDLRNW…TLVALAGLAK (105 aa)) form the Calponin-homology (CH) domain. At Lys-158 the chain carries N6-methyllysine. Calponin-like repeat units lie at residues 164-189 (IGLQ…RHLY), 204-229 (ISLQ…RDIY), and 243-268 (ISLQ…RQVY). A disordered region spans residues 279–330 (PVIHNGSQGTGTNGSEISDSDYQAEYPDEYHGEYPDEYPREYQYGDDQGIDY). Residues 306–318 (DEYHGEYPDEYPR) are compositionally biased toward basic and acidic residues.

The protein belongs to the calponin family.

Its function is as follows. Thin filament-associated protein that is implicated in the regulation and modulation of smooth muscle contraction. It is capable of binding to actin, calmodulin and tropomyosin. The interaction of calponin with actin inhibits the actomyosin Mg-ATPase activity. The sequence is that of Calponin-3 (Cnn3) from Rattus norvegicus (Rat).